The following is a 198-amino-acid chain: Formate-dependent nitrite reductase complex subunit NrfG (198 aa).

TPR repeat units follow at residues 73-106 (SEQW…RGEN) and 144-177 (ITAL…NSPR).

Functionally, required for formate-dependent nitrite reduction. Not required for the biosynthesis of any of the c-type cytochromes nor for the secretion of the periplasmic cytochromes. This chain is Formate-dependent nitrite reductase complex subunit NrfG (nrfG), found in Escherichia coli O157:H7.